The chain runs to 398 residues: Succinyl-diaminopimelate desuccinylase (398 aa).

Histidine 68 serves as a coordination point for Zn(2+). Residue aspartate 70 is part of the active site. Residue aspartate 101 coordinates Zn(2+). Catalysis depends on glutamate 135, which acts as the Proton acceptor. Residues glutamate 136, glutamate 164, and histidine 349 each contribute to the Zn(2+) site.

This sequence belongs to the peptidase M20A family. DapE subfamily. As to quaternary structure, homodimer. The cofactor is Zn(2+). It depends on Co(2+) as a cofactor.

The catalysed reaction is N-succinyl-(2S,6S)-2,6-diaminopimelate + H2O = (2S,6S)-2,6-diaminopimelate + succinate. The protein operates within amino-acid biosynthesis; L-lysine biosynthesis via DAP pathway; LL-2,6-diaminopimelate from (S)-tetrahydrodipicolinate (succinylase route): step 3/3. Its function is as follows. Catalyzes the hydrolysis of N-succinyl-L,L-diaminopimelic acid (SDAP), forming succinate and LL-2,6-diaminopimelate (DAP), an intermediate involved in the bacterial biosynthesis of lysine and meso-diaminopimelic acid, an essential component of bacterial cell walls. This chain is Succinyl-diaminopimelate desuccinylase, found in Wolbachia pipientis subsp. Culex pipiens (strain wPip).